The chain runs to 475 residues: ATP synthase subunit beta, chloroplastic (475 aa).

156–163 serves as a coordination point for ATP; that stretch reads GGAGVGKT.

The protein belongs to the ATPase alpha/beta chains family. As to quaternary structure, F-type ATPases have 2 components, CF(1) - the catalytic core - and CF(0) - the membrane proton channel. CF(1) has five subunits: alpha(3), beta(3), gamma(1), delta(1), epsilon(1). CF(0) has four main subunits: a(1), b(1), b'(1) and c(9-12).

It is found in the plastid. It localises to the chloroplast thylakoid membrane. The catalysed reaction is ATP + H2O + 4 H(+)(in) = ADP + phosphate + 5 H(+)(out). Functionally, produces ATP from ADP in the presence of a proton gradient across the membrane. The catalytic sites are hosted primarily by the beta subunits. In Gracilaria tenuistipitata var. liui (Red alga), this protein is ATP synthase subunit beta, chloroplastic.